The sequence spans 65 residues: Hirudin-2 (65 aa).

The segment at 1-3 is interaction with thrombin active site; it reads ITY. Intrachain disulfides connect Cys6–Cys14, Cys16–Cys28, and Cys22–Cys39. Residues 39 to 65 form a disordered region; that stretch reads CVTGEGTPKPQSHNDGDFEEIPEEYLQ. O-linked (GalNAc...) threonine glycosylation occurs at Thr45. Residues 55–65 are interaction with fibrinogen-binding exosite of thrombin; sequence DFEEIPEEYLQ. Residues 55-65 are compositionally biased toward acidic residues; that stretch reads DFEEIPEEYLQ. Tyr63 is modified (sulfotyrosine).

It belongs to the protease inhibitor I14 (hirudin) family.

It is found in the secreted. In terms of biological role, hirudin is a potent thrombin-specific protease inhibitor. It forms a stable non-covalent complex with alpha-thrombin, thereby abolishing its ability to cleave fibrinogen. The protein is Hirudin-2 of Hirudo medicinalis (Medicinal leech).